Consider the following 172-residue polypeptide: Probable tryptophan transport protein (172 aa).

A run of 4 helical transmembrane segments spans residues 7-29 (VIMALFAAIGAALHSIIPPFLGG), 49-71 (VQNVLVIGIVTGIISALTTAFPA), 104-126 (AVLTVIGTILSGIVFLSSALLIV), and 136-158 (FAAVVLPAAVLNTISMIIIYPIV).

It belongs to the vitamin uptake transporter (VUT/ECF) (TC 2.A.88) family. TrpP subfamily.

It is found in the cell membrane. Its function is as follows. Probably involved in tryptophan uptake. This is Probable tryptophan transport protein (trpP) from Bacillus subtilis (strain 168).